A 652-amino-acid polypeptide reads, in one-letter code: MKIHILPIEIINKIAAGEILEKPANAVKELVENAIDAGSTSIKVELEEVGRNLIRVTDNGVGISREDLPLAIEKHATSKLNTKDLYDISYLGFRGEALHSIAITSEMKIASCFNGEGYVIDAQTKEVKPHHIKCGTLVEVRKLFHNIPNKLRFLRSEKTELSSIIELLNRLALVNPNIAFELISNGRQVFDYQTATQLKRMEQLKVLGKEFVENMIHVKHTNDGIFGELFLGLPTLTQKRNNCLIFVNGRPVKDSVISSVMRHAYNDYIPKNTYPIAVIFIRVHNNEVDVNIHPNKSEVKFRDPQVIRRFLLSVSSRSLLQCGRSTSTTVADRAVEQFNQLLKKQTAFRKETVSKTTESGFFQSPKAKKAIDQSQEYAKQFEGKRNLDFDQMQNNNGPFHFSTDQSEEALPLMSHKKTSEDYSNKLPLEKQQSPSIFLHDNRDTSFLQQQLRKINHCEHLQNEKHFETFGKFKCQVHGTFIITETENEMIIIDQHAAHERILYEQMKKSITSPGQNLLTAEFVPLSEKAVEILSFNVEKLKEIGLVVERVSHCAVMVNSLPEAFKNVPTNELIEDIASLLEEEIEPKTLLERIHANIACKRAIKANHNLTREEIEELLTLMEDIPHTGQCNHGRPTHIRLPRKEIEKLFLRS.

This sequence belongs to the DNA mismatch repair MutL/HexB family.

This protein is involved in the repair of mismatches in DNA. It is required for dam-dependent methyl-directed DNA mismatch repair. May act as a 'molecular matchmaker', a protein that promotes the formation of a stable complex between two or more DNA-binding proteins in an ATP-dependent manner without itself being part of a final effector complex. The sequence is that of DNA mismatch repair protein MutL from Neorickettsia sennetsu (strain ATCC VR-367 / Miyayama) (Ehrlichia sennetsu).